The sequence spans 387 residues: Alpha-maltose-1-phosphate synthase (387 aa).

The protein belongs to the glycosyltransferase group 1 family.

It carries out the reaction ADP-alpha-D-glucose + alpha-D-glucose 1-phosphate = alpha-maltose 1-phosphate + ADP + H(+). It participates in glycan biosynthesis; glycogen biosynthesis. Its function is as follows. Involved in the biosynthesis of the maltose-1-phosphate (M1P) building block required for alpha-glucan production by the key enzyme GlgE. Catalyzes the formation of an alpha-1,4 linkage between glucose from ADP-glucose and glucose 1-phosphate (G1P) to yield maltose-1-phosphate (M1P). The chain is Alpha-maltose-1-phosphate synthase from Mycolicibacterium smegmatis (strain ATCC 700084 / mc(2)155) (Mycobacterium smegmatis).